The following is a 393-amino-acid chain: Ig heavy chain C region (393 aa).

Ig-like domains are found at residues 63 to 157 (PTVI…RNIT), 168 to 260 (PVIK…ASIH), and 270 to 370 (PSVS…RTVN). 8 N-linked (GlcNAc...) asparagine glycosylation sites follow: asparagine 119, asparagine 155, asparagine 200, asparagine 230, asparagine 329, asparagine 366, asparagine 370, and asparagine 380.

The sequence is that of Ig heavy chain C region from Heterodontus francisci (Horn shark).